Here is a 461-residue protein sequence, read N- to C-terminus: Bifunctional protein GlmU (461 aa).

The segment at 1-235 (MTDTRKQRAA…EDDLIGCDSK (235 aa)) is pyrophosphorylase. UDP-N-acetyl-alpha-D-glucosamine is bound by residues 13-16 (LAAG), K27, Q80, 85-86 (GT), 108-110 (YGD), G146, E161, and N176. D110 lines the Mg(2+) pocket. Residues 236–256 (ADLAEAEAIFQQKRRRALMEA) are linker. Residues 257 to 461 (GVTMVAPETV…ARTTDQNKKG (205 aa)) form an N-acetyltransferase region. Residues R322 and K340 each coordinate UDP-N-acetyl-alpha-D-glucosamine. H352 functions as the Proton acceptor in the catalytic mechanism. The UDP-N-acetyl-alpha-D-glucosamine site is built by Y355 and N366. Acetyl-CoA is bound by residues A369, 375–376 (NY), S394, S412, and R429.

It in the N-terminal section; belongs to the N-acetylglucosamine-1-phosphate uridyltransferase family. In the C-terminal section; belongs to the transferase hexapeptide repeat family. Homotrimer. Mg(2+) is required as a cofactor.

The protein localises to the cytoplasm. It catalyses the reaction alpha-D-glucosamine 1-phosphate + acetyl-CoA = N-acetyl-alpha-D-glucosamine 1-phosphate + CoA + H(+). The catalysed reaction is N-acetyl-alpha-D-glucosamine 1-phosphate + UTP + H(+) = UDP-N-acetyl-alpha-D-glucosamine + diphosphate. Its pathway is nucleotide-sugar biosynthesis; UDP-N-acetyl-alpha-D-glucosamine biosynthesis; N-acetyl-alpha-D-glucosamine 1-phosphate from alpha-D-glucosamine 6-phosphate (route II): step 2/2. It participates in nucleotide-sugar biosynthesis; UDP-N-acetyl-alpha-D-glucosamine biosynthesis; UDP-N-acetyl-alpha-D-glucosamine from N-acetyl-alpha-D-glucosamine 1-phosphate: step 1/1. It functions in the pathway bacterial outer membrane biogenesis; LPS lipid A biosynthesis. Catalyzes the last two sequential reactions in the de novo biosynthetic pathway for UDP-N-acetylglucosamine (UDP-GlcNAc). The C-terminal domain catalyzes the transfer of acetyl group from acetyl coenzyme A to glucosamine-1-phosphate (GlcN-1-P) to produce N-acetylglucosamine-1-phosphate (GlcNAc-1-P), which is converted into UDP-GlcNAc by the transfer of uridine 5-monophosphate (from uridine 5-triphosphate), a reaction catalyzed by the N-terminal domain. The polypeptide is Bifunctional protein GlmU (Hyphomonas neptunium (strain ATCC 15444)).